Consider the following 351-residue polypeptide: Dual-specificity RNA methyltransferase RlmN (351 aa).

The active-site Proton acceptor is Glu90. Residues 96–330 enclose the Radical SAM core domain; that stretch reads EKDHYTACLS…ATLRKSKGSD (235 aa). Cys103 and Cys335 are disulfide-bonded. The [4Fe-4S] cluster site is built by Cys110, Cys114, and Cys117. Residues 162 to 163, Ser194, 216 to 218, and Asn292 contribute to the S-adenosyl-L-methionine site; these read GE and SLH. The active-site S-methylcysteine intermediate is Cys335.

Belongs to the radical SAM superfamily. RlmN family. [4Fe-4S] cluster serves as cofactor.

Its subcellular location is the cytoplasm. The catalysed reaction is adenosine(2503) in 23S rRNA + 2 reduced [2Fe-2S]-[ferredoxin] + 2 S-adenosyl-L-methionine = 2-methyladenosine(2503) in 23S rRNA + 5'-deoxyadenosine + L-methionine + 2 oxidized [2Fe-2S]-[ferredoxin] + S-adenosyl-L-homocysteine. The enzyme catalyses adenosine(37) in tRNA + 2 reduced [2Fe-2S]-[ferredoxin] + 2 S-adenosyl-L-methionine = 2-methyladenosine(37) in tRNA + 5'-deoxyadenosine + L-methionine + 2 oxidized [2Fe-2S]-[ferredoxin] + S-adenosyl-L-homocysteine. Functionally, specifically methylates position 2 of adenine 2503 in 23S rRNA and position 2 of adenine 37 in tRNAs. m2A2503 modification seems to play a crucial role in the proofreading step occurring at the peptidyl transferase center and thus would serve to optimize ribosomal fidelity. The protein is Dual-specificity RNA methyltransferase RlmN of Solidesulfovibrio magneticus (strain ATCC 700980 / DSM 13731 / RS-1) (Desulfovibrio magneticus).